The following is a 350-amino-acid chain: S-adenosylmethionine:tRNA ribosyltransferase-isomerase (350 aa).

It belongs to the QueA family. Monomer.

It localises to the cytoplasm. The enzyme catalyses 7-aminomethyl-7-carbaguanosine(34) in tRNA + S-adenosyl-L-methionine = epoxyqueuosine(34) in tRNA + adenine + L-methionine + 2 H(+). The protein operates within tRNA modification; tRNA-queuosine biosynthesis. In terms of biological role, transfers and isomerizes the ribose moiety from AdoMet to the 7-aminomethyl group of 7-deazaguanine (preQ1-tRNA) to give epoxyqueuosine (oQ-tRNA). In Parvibaculum lavamentivorans (strain DS-1 / DSM 13023 / NCIMB 13966), this protein is S-adenosylmethionine:tRNA ribosyltransferase-isomerase.